The sequence spans 660 residues: ATPase WRNIP1 (660 aa).

A UBZ4-type zinc finger spans residues 17-44 (QVQCPVCQQMMPAAHINSHLDRCLLLHP). C20, C23, H31, H35, and C39 together coordinate Zn(2+). The disordered stretch occupies residues 48 to 191 (AEPAAGSHRA…DDPGHWDADA (144 aa)). A phosphoserine mark is found at S65 and S75. Residues 76–89 (ESSALKQPATPTAA) show a composition bias toward polar residues. Residue K81 forms a Glycyl lysine isopeptide (Lys-Gly) (interchain with G-Cter in ubiquitin) linkage. The residue at position 85 (T85) is a Phosphothreonine. S91 and S92 each carry phosphoserine. Residues 92-104 (SEGEGEEGDDGGE) are compositionally biased toward acidic residues. Residue T116 is modified to Phosphothreonine. Residues 135-155 (ARKGMGKRPAAAAAAGSASPR) are compositionally biased toward low complexity. Residue K141 forms a Glycyl lysine isopeptide (Lys-Gly) (interchain with G-Cter in ubiquitin) linkage. Phosphoserine is present on S153. A compositionally biased stretch (acidic residues) spans 159–182 (EAEAQEEEEAGVDGDGDADVDGED). Residue K220 forms a Glycyl lysine isopeptide (Lys-Gly) (interchain with G-Cter in ubiquitin) linkage. Residue 265 to 271 (PGCGKTT) coordinates ATP. Residues K296, K305, K311, K317, and K330 each participate in a glycyl lysine isopeptide (Lys-Gly) (interchain with G-Cter in ubiquitin) cross-link. A Glycyl lysine isopeptide (Lys-Gly) (interchain with G-Cter in SUMO2); alternate cross-link involves residue K477. K477 is covalently cross-linked (Glycyl lysine isopeptide (Lys-Gly) (interchain with G-Cter in ubiquitin); alternate). Y529 and Y557 each carry phosphotyrosine. K622 is covalently cross-linked (Glycyl lysine isopeptide (Lys-Gly) (interchain with G-Cter in ubiquitin)). K628 is covalently cross-linked (Glycyl lysine isopeptide (Lys-Gly) (interchain with G-Cter in ubiquitin); alternate). N6-acetyllysine; alternate is present on K628. Residue K631 forms a Glycyl lysine isopeptide (Lys-Gly) (interchain with G-Cter in ubiquitin) linkage.

This sequence belongs to the AAA ATPase family. RarA/MGS1/WRNIP1 subfamily. Forms homooligomers, possibly octamers. Directly interacts with POLD1, POLD2 and POLD4. Interacts with the N-terminal domain of WRN. Interacts (via UBZ4-type zinc finger) with monoubiquitin and polyubiquitin. Interacts with TRIM14 and PPP6C; these interactions positively regulate the RIGI signaling pathway. Post-translationally, sumoylated with SUMO1 and SUMO2/3. In terms of tissue distribution, ubiquitously expressed.

The protein localises to the nucleus. It is found in the cytoplasm. It catalyses the reaction ATP + H2O = ADP + phosphate + H(+). In terms of biological role, functions as a modulator of initiation or reinitiation events during DNA polymerase delta-mediated DNA synthesis. In the presence of ATP, stimulation of DNA polymerase delta-mediated DNA synthesis is decreased. Also plays a role in the innate immune defense against viruses. Stabilizes the RIGI dsRNA interaction and promotes RIGI 'Lys-63'-linked polyubiquitination. In turn, RIGI transmits the signal through mitochondrial MAVS. The protein is ATPase WRNIP1 of Mus musculus (Mouse).